We begin with the raw amino-acid sequence, 954 residues long: Glycine dehydrogenase (decarboxylating) (954 aa).

Lys-701 carries the post-translational modification N6-(pyridoxal phosphate)lysine.

This sequence belongs to the GcvP family. In terms of assembly, the glycine cleavage system is composed of four proteins: P, T, L and H. Requires pyridoxal 5'-phosphate as cofactor.

It catalyses the reaction N(6)-[(R)-lipoyl]-L-lysyl-[glycine-cleavage complex H protein] + glycine + H(+) = N(6)-[(R)-S(8)-aminomethyldihydrolipoyl]-L-lysyl-[glycine-cleavage complex H protein] + CO2. Its function is as follows. The glycine cleavage system catalyzes the degradation of glycine. The P protein binds the alpha-amino group of glycine through its pyridoxal phosphate cofactor; CO(2) is released and the remaining methylamine moiety is then transferred to the lipoamide cofactor of the H protein. The sequence is that of Glycine dehydrogenase (decarboxylating) from Bordetella pertussis (strain Tohama I / ATCC BAA-589 / NCTC 13251).